Reading from the N-terminus, the 305-residue chain is MSGITPERQTHLKQLEAESIHIIREVAAEFANPVMLYSIGKDSSVMLHLARKAFYPGTPPFPLMHVNTTWKFKEMIEFRDRMAAEVGMELIEHINEEGRAAGINPFDHGSAKYTDVMKTQSLKQALDKYGFDAAFGGARRDEEASRAKERVYSFRDKHHRWDPKNQRPELWNIYNGKVQKGESIRVFPLSNWTELDIWQYIYLESIPIVPLYYAAPRPVVERDGMQIMVDDERLPLEDGEVPEEKWVRFRTLGCYPLTGAVESTAATLPEIIQEMLLTRTSERSGRAIDHDQAGSMERKKREGYF.

A disordered region spans residues 283–305; the sequence is RSGRAIDHDQAGSMERKKREGYF.

The protein belongs to the PAPS reductase family. CysD subfamily. As to quaternary structure, heterodimer composed of CysD, the smaller subunit, and CysN.

The enzyme catalyses sulfate + ATP + H(+) = adenosine 5'-phosphosulfate + diphosphate. It functions in the pathway sulfur metabolism; hydrogen sulfide biosynthesis; sulfite from sulfate: step 1/3. Its function is as follows. With CysN forms the ATP sulfurylase (ATPS) that catalyzes the adenylation of sulfate producing adenosine 5'-phosphosulfate (APS) and diphosphate, the first enzymatic step in sulfur assimilation pathway. APS synthesis involves the formation of a high-energy phosphoric-sulfuric acid anhydride bond driven by GTP hydrolysis by CysN coupled to ATP hydrolysis by CysD. The sequence is that of Sulfate adenylyltransferase subunit 2 1 from Chromohalobacter salexigens (strain ATCC BAA-138 / DSM 3043 / CIP 106854 / NCIMB 13768 / 1H11).